Consider the following 479-residue polypeptide: MAPVSLPPGFRFHPTDEELITYYLKRKINGLEIELEVIAEVDLYKCEPWDLPGKSLLPSKDQEWYFFSPRDRKYPNGSRTNRATKGGYWKATGKDRRVSWRDRAIGTKKTLVYYRGRAPHGIRTGWVMHEYRLDETECEPSAYGMQDAYALCRVFKKIVIEAKPRDQHRSYVHAMSNVSGNCSSSFDTCSDLEISSTTHQVQNTFQPRFGNERFNSNAISNEDWSQYYGSSYRPFPTPYKVNTEIECSMLQHNIYLPPLRVENSAFSDSDFFTSMTHNNDHGVFDDFTFAASNSNHNNSVGDQVIHVGNYDEQLITSNRHMNQTGYIKEQKIRSSLDNTDEDPGFHGNNTNDNIDIDDFLSFDIYNEDNVNQIEDNEDVNTNETLDSSGFEVVEEETRFNNQMLISTYQTTKILYHQVVPCHTLKVHVNPISHNVEERTLFIEEDKDSWLQRAEKITKTKLTLFSLMAQQYYKCLAIFF.

Positions 6-157 (LPPGFRFHPT…AYALCRVFKK (152 aa)) constitute an NAC domain. The DNA-binding element occupies 105–163 (IGTKKTLVYYRGRAPHGIRTGWVMHEYRLDETECEPSAYGMQDAYALCRVFKKIVIEAK).

Expressed in a few sieve element cells before enucleation and in phloem-pole pericycle cells.

The protein resides in the nucleus. Transcription factor directing sieve element enucleation and cytosol degradation. Not required for formation of lytic vacuoles. Regulates, with NAC086, the transcription of NEN1, NEN2, NEN3, NEN4, RTM1, RTM2, UBP16, PLDZETA, ABCB10 and At1g26450. This Arabidopsis thaliana (Mouse-ear cress) protein is NAC domain-containing protein 45.